A 119-amino-acid polypeptide reads, in one-letter code: Phosphoribosyl-AMP cyclohydrolase (119 aa).

Residue Asp-71 coordinates Mg(2+). Cys-72 lines the Zn(2+) pocket. Mg(2+) is bound by residues Asp-73 and Asp-75. The Zn(2+) site is built by Cys-90 and Cys-97.

It belongs to the PRA-CH family. As to quaternary structure, homodimer. The cofactor is Mg(2+). Requires Zn(2+) as cofactor.

Its subcellular location is the cytoplasm. The enzyme catalyses 1-(5-phospho-beta-D-ribosyl)-5'-AMP + H2O = 1-(5-phospho-beta-D-ribosyl)-5-[(5-phospho-beta-D-ribosylamino)methylideneamino]imidazole-4-carboxamide. The protein operates within amino-acid biosynthesis; L-histidine biosynthesis; L-histidine from 5-phospho-alpha-D-ribose 1-diphosphate: step 3/9. Its function is as follows. Catalyzes the hydrolysis of the adenine ring of phosphoribosyl-AMP. In Brucella abortus (strain 2308), this protein is Phosphoribosyl-AMP cyclohydrolase.